A 98-amino-acid polypeptide reads, in one-letter code: Large ribosomal subunit protein uL23 (98 aa).

Belongs to the universal ribosomal protein uL23 family. As to quaternary structure, part of the 50S ribosomal subunit. Contacts protein L29, and trigger factor when it is bound to the ribosome.

In terms of biological role, one of the early assembly proteins it binds 23S rRNA. One of the proteins that surrounds the polypeptide exit tunnel on the outside of the ribosome. Forms the main docking site for trigger factor binding to the ribosome. This is Large ribosomal subunit protein uL23 from Rickettsia bellii (strain OSU 85-389).